A 251-amino-acid chain; its full sequence is uncharacterized protein (251 aa).

The next 7 membrane-spanning stretches (helical) occupy residues 48-68, 88-108, 110-130, 132-152, 158-178, 184-204, and 209-229; these read WMVG…VELI, VLWG…LVAN, IPLL…FIWV, AMVW…GSSF, IGVS…GLFV, IIGC…MPVL, and GVSW…AYLL.

This sequence to M.tuberculosis Rv1337.

It is found in the cell membrane. This is an uncharacterized protein from Mycobacterium leprae (strain TN).